Consider the following 210-residue polypeptide: Thymidylate kinase (210 aa).

G9–T16 is a binding site for ATP.

Belongs to the thymidylate kinase family.

The catalysed reaction is dTMP + ATP = dTDP + ADP. Phosphorylation of dTMP to form dTDP in both de novo and salvage pathways of dTTP synthesis. The protein is Thymidylate kinase of Thermomicrobium roseum (strain ATCC 27502 / DSM 5159 / P-2).